We begin with the raw amino-acid sequence, 585 residues long: MRRYMVTYAWQLLKKELGLYQFATDIIVMIRVCKMFRQGLRGFREYQIIESAHWKHPIFSFWDKKIQSRVTFDTMDFIAEEGHFPPKAIQIMQKKPSWRTEDEIQTVCNILQVLDSYRNYAEPLQLLLAKVMRFERFGRRRVIIKKGQKGNSFYFIYLGTVAITNDEDGSSAFLDPHPKLLQKGSCFGETDIQHASLRRSTIVCMEETEFLVVDREDFFANKLDQEVQKDAQYRFEFFRKMDLFASWSDEKLWQLVNMSKIERFSYGQLISKDFGESSFIMFISKGSCEVLRLLDLGASPSYHRWVWQHLELIDDRPLKTHLREYSPMERFKEFQIKSYPLQDFSSLKLLHLKKAWGLQGTSFSRKIGTSGDTLPKMLGPKIQSRPVQSIKCAMINTKFGELPKEAAVGAYMKVHTVEQGEILGLHQAFLPEGECDTRPLILMSLGNELIRIRKEIFYELIDNDDEMIKKLLKLNIAFPSDEDMCQKFLQENSWNIFRKDLLRLLVEPRQSPPFPPIRPKKKEIYNPKSVVLDLCSINKTTKPRYPIFMAPQKYLPPLRIVQAIKAPRYKIQELLPQYKSAGVLI.

116 to 239 (SYRNYAEPLQ…DAQYRFEFFR (124 aa)) serves as a coordination point for a nucleoside 3',5'-cyclic phosphate.

The protein localises to the cytoplasm. Its subcellular location is the cytosol. Functionally, essential for male fertility. Plays an important role in spermatogenesis and regulates sperm motility by controlling the development of the flagellar bending of sperm. The polypeptide is Cyclic nucleotide-binding domain-containing protein 2 (CNBD2) (Macaca fascicularis (Crab-eating macaque)).